The following is a 63-amino-acid chain: Male-specific sperm protein Mst84Da (63 aa).

Belongs to the MST(3)CGP family. As to expression, testis.

In Drosophila melanogaster (Fruit fly), this protein is Male-specific sperm protein Mst84Da (Mst84Da).